The primary structure comprises 538 residues: CTP synthase (538 aa).

The interval 1–269 (MSPRKYVIVT…ARLVERRLFG (269 aa)) is amidoligase domain. CTP is bound at residue Ser-15. Ser-15 serves as a coordination point for UTP. 16-21 (SVGKGL) is an ATP binding site. Tyr-56 is an L-glutamine binding site. Asp-73 is a binding site for ATP. Positions 73 and 143 each coordinate Mg(2+). Residues 150–152 (DIE), 190–195 (KTKPVQ), and Lys-226 each bind CTP. UTP contacts are provided by residues 190-195 (KTKPVQ) and Lys-226. Residues 294-538 (KVAMVGKYTK…FVTAVARLRG (245 aa)) enclose the Glutamine amidotransferase type-1 domain. L-glutamine is bound at residue Gly-358. Cys-385 functions as the Nucleophile; for glutamine hydrolysis in the catalytic mechanism. L-glutamine is bound by residues 386 to 389 (FGMQ), Glu-409, and Arg-466. Catalysis depends on residues His-512 and Glu-514.

The protein belongs to the CTP synthase family. In terms of assembly, homotetramer.

The catalysed reaction is UTP + L-glutamine + ATP + H2O = CTP + L-glutamate + ADP + phosphate + 2 H(+). The enzyme catalyses L-glutamine + H2O = L-glutamate + NH4(+). It carries out the reaction UTP + NH4(+) + ATP = CTP + ADP + phosphate + 2 H(+). Its pathway is pyrimidine metabolism; CTP biosynthesis via de novo pathway; CTP from UDP: step 2/2. With respect to regulation, allosterically activated by GTP, when glutamine is the substrate; GTP has no effect on the reaction when ammonia is the substrate. The allosteric effector GTP functions by stabilizing the protein conformation that binds the tetrahedral intermediate(s) formed during glutamine hydrolysis. Inhibited by the product CTP, via allosteric rather than competitive inhibition. Catalyzes the ATP-dependent amination of UTP to CTP with either L-glutamine or ammonia as the source of nitrogen. Regulates intracellular CTP levels through interactions with the four ribonucleotide triphosphates. This is CTP synthase from Aeropyrum pernix (strain ATCC 700893 / DSM 11879 / JCM 9820 / NBRC 100138 / K1).